A 148-amino-acid chain; its full sequence is DnaJ homolog subfamily C member 24 (148 aa).

One can recognise a J domain in the interval 10-81 (DWYSILGADP…ETKKKYDLQR (72 aa)). The 56-residue stretch at 92-147 (VDAQVRLEEMSWNQGDESFFLSCRCGGKYTVSKDEAQEATLISCDACSLIVELLHQ) folds into the DPH-type MB domain. Positions 114, 116, 135, and 138 each coordinate Zn(2+).

It belongs to the DPH4 family. Monomer and homooligomer. Iron binding promotes oligomerization. As to expression, detected in heart, brain, spleen, lung, liver, kidney and testis.

The protein localises to the cytoplasm. It is found in the cytoskeleton. The protein operates within protein modification; peptidyl-diphthamide biosynthesis. Functionally, the iron-bound form is redox-active and can function as electron carrier. Stimulates the ATPase activity of several Hsp70-type chaperones. This ability is enhanced by iron-binding. Plays a role in the diphthamide biosynthesis, a post-translational modification of histidine which occurs in translation elongation factor 2 (EEF2). This Mus musculus (Mouse) protein is DnaJ homolog subfamily C member 24 (Dnajc24).